Here is a 495-residue protein sequence, read N- to C-terminus: UDP-N-acetylmuramoyl-L-alanyl-D-glutamate--2,6-diaminopimelate ligase (495 aa).

UDP-N-acetyl-alpha-D-muramoyl-L-alanyl-D-glutamate is bound by residues leucine 27, serine 29, and histidine 44–alanine 46. Glycine 116–threonine 122 provides a ligand contact to ATP. UDP-N-acetyl-alpha-D-muramoyl-L-alanyl-D-glutamate contacts are provided by residues asparagine 157, threonine 158–threonine 159, serine 185, glutamine 191, and arginine 193. N6-carboxylysine is present on lysine 225. Meso-2,6-diaminopimelate-binding positions include arginine 390, aspartate 414–arginine 417, glycine 465, and glutamate 469. The Meso-diaminopimelate recognition motif motif lies at aspartate 414–arginine 417.

Belongs to the MurCDEF family. MurE subfamily. Mg(2+) serves as cofactor. Post-translationally, carboxylation is probably crucial for Mg(2+) binding and, consequently, for the gamma-phosphate positioning of ATP.

It localises to the cytoplasm. It catalyses the reaction UDP-N-acetyl-alpha-D-muramoyl-L-alanyl-D-glutamate + meso-2,6-diaminopimelate + ATP = UDP-N-acetyl-alpha-D-muramoyl-L-alanyl-gamma-D-glutamyl-meso-2,6-diaminopimelate + ADP + phosphate + H(+). It functions in the pathway cell wall biogenesis; peptidoglycan biosynthesis. Functionally, catalyzes the addition of meso-diaminopimelic acid to the nucleotide precursor UDP-N-acetylmuramoyl-L-alanyl-D-glutamate (UMAG) in the biosynthesis of bacterial cell-wall peptidoglycan. This is UDP-N-acetylmuramoyl-L-alanyl-D-glutamate--2,6-diaminopimelate ligase from Pectobacterium atrosepticum (strain SCRI 1043 / ATCC BAA-672) (Erwinia carotovora subsp. atroseptica).